The primary structure comprises 1199 residues: RNA-binding protein 20 (1199 aa).

3 disordered regions span residues 1–55 (MVLA…PQAS), 163–186 (PSTAIAFSPPSQTGGPGPSVSLPS), and 320–346 (ERPPGFSGQNKPDITAGPSLWAPPASQ). A compositionally biased stretch (low complexity) spans 25–42 (VMPGVQGPSVPQGQQGMQ). Residues 43–52 (PLPPPPPPQP) are compositionally biased toward pro residues. Residues 170–183 (SPPSQTGGPGPSVS) are compositionally biased toward low complexity. A U1-type zinc finger spans residues 410–444 (HLPHICSICDKKVFDLKDWELHVKGKLHAQKCLLF). An RRM domain is found at 520-595 (RVVHICNLPE…EKLLIRMSTR (76 aa)). The segment covering 626 to 636 (EADRYGPERPR) has biased composition (basic and acidic residues). Disordered regions lie at residues 626–685 (EADR…NGED), 720–884 (REKY…YPTN), and 944–1077 (GETL…SQAC). Residues 630-649 (YGPERPRSRSPMSRSLSPRS) form an RS region. A phosphoserine mark is found at S637, S639, S642, S644, and S651. Over residues 638–649 (RSPMSRSLSPRS) the composition is skewed to low complexity. A compositionally biased stretch (basic and acidic residues) spans 667 to 685 (YAWRDEDRETVPRRENGED). S728 bears the Phosphoserine mark. Basic and acidic residues-rich tracts occupy residues 739–758 (KGREDGYHRKEPKAKLDKYP), 770–831 (RKEE…KESQ), and 859–868 (ENTRTKKGQD). S787 is subject to Phosphoserine. Residues S871, S873, and S955 each carry the phosphoserine modification. The span at 962-971 (VPSTSASCPN) shows a compositional bias: polar residues. A phosphoserine mark is found at S991, S1026, S1038, S1049, S1054, S1058, S1070, S1088, and S1093. The segment covering 1042-1055 (DDCKARGSPEDGSH) has biased composition (basic and acidic residues). Polar residues predominate over residues 1067-1077 (PTESDLQSQAC). A Matrin-type zinc finger spans residues 1133–1164 (FYCKLCGLFYTSEEAAKVSHCRSTVHYRNLQK). The segment at 1172–1199 (EGLKETEGTDSPSPERGGIGPHLERKKL) is disordered. Phosphoserine is present on residues S1182 and S1184.

As to quaternary structure, associates with components of the U1 and U2 U1 small nuclear ribonucleoprotein complexes. In terms of processing, phosphorylation regulates the subcellular localization. Phosphorylation of Ser-637 and Ser-639 in the RS (arginine/serine-rich) region promotes nuclear localization of the protein. In contrast, phosphorylation of the C-terminal disordered region promotes localization to cytoplasmic ribonucleoprotein granules. Predominantly expressed in striated muscle, with highest expression in the heart. In differentiating myoblasts, expression correlates with sarcomere assembly: expression peaks when alpha-actinin is localized mainly in mature Z bodies within the nascent myofiber and expression declines as the sarcomeres continue to mature. Also expressed in kidney.

It localises to the nucleus. Its subcellular location is the cytoplasm. It is found in the cytoplasmic ribonucleoprotein granule. Functionally, RNA-binding protein that acts as a regulator of mRNA splicing of a subset of genes encoding key structural proteins involved in cardiac development, such as TTN (Titin), CACNA1C, CAMK2D or PDLIM5/ENH. Acts as a repressor of mRNA splicing: specifically binds the 5'UCUU-3' motif that is predominantly found within intronic sequences of pre-mRNAs, leading to the exclusion of specific exons in target transcripts. RBM20-mediated exon skipping is hormone-dependent and is essential for TTN isoform transition in both cardiac and skeletal muscles. RBM20-mediated exon skipping of TTN provides substrates for the formation of circular RNA (circRNAs) from the TTN transcripts. Together with RBM24, promotes the expression of short isoforms of PDLIM5/ENH in cardiomyocytes. In Mus musculus (Mouse), this protein is RNA-binding protein 20.